We begin with the raw amino-acid sequence, 647 residues long: DNA polymerase subunit gamma-1 (647 aa).

The segment at 116–147 (ERPGRAEQSQMQDEDGLPELVEESSQPSFHHG) is disordered. Over residues 127-137 (QDEDGLPELVE) the composition is skewed to acidic residues.

The protein belongs to the DNA polymerase type-A family. Heterotrimer composed of a catalytic subunit and a homodimer of accessory subunits. Interacts with TTC3. Requires Mg(2+) as cofactor.

It localises to the mitochondrion. It is found in the mitochondrion matrix. The protein localises to the mitochondrion nucleoid. It carries out the reaction DNA(n) + a 2'-deoxyribonucleoside 5'-triphosphate = DNA(n+1) + diphosphate. Its function is as follows. Involved in the replication of mitochondrial DNA. Associates with mitochondrial DNA. The polypeptide is DNA polymerase subunit gamma-1 (POLG) (Gallus gallus (Chicken)).